The sequence spans 199 residues: Translation initiation factor IF-3 (199 aa).

Belongs to the IF-3 family. Monomer.

The protein resides in the cytoplasm. IF-3 binds to the 30S ribosomal subunit and shifts the equilibrium between 70S ribosomes and their 50S and 30S subunits in favor of the free subunits, thus enhancing the availability of 30S subunits on which protein synthesis initiation begins. The sequence is that of Translation initiation factor IF-3 from Mycoplasmopsis pulmonis (strain UAB CTIP) (Mycoplasma pulmonis).